The sequence spans 780 residues: Pumilio domain-containing protein C4G8.03c (780 aa).

Disordered regions lie at residues 1–29 (MVNR…LSSY), 298–330 (LSHF…LHSK), and 358–411 (NHHS…GKTV). Residues 298 to 307 (LSHFPDHLDP) are compositionally biased toward basic and acidic residues. Residues 311 to 322 (PSPYQPSSLQPL) are compositionally biased toward low complexity. The span at 358–382 (NHHSSLSMDNDPTNVSTKNRNNQTV) shows a compositional bias: polar residues. Positions 435–778 (EKSDDLSNLL…HILAKLTSST (344 aa)) constitute a PUM-HD domain. 9 Pumilio repeats span residues 462 to 497 (GFLG…LFFP), 498 to 533 (EIRQ…SMLN), 534 to 569 (GIGE…SLLL), 570 to 606 (KIII…PLFL), 607 to 642 (SMEE…RLVN), 643 to 678 (SIIK…RIIE), 679 to 714 (KFFG…QMLQ), 715 to 752 (EFLS…LILR), and 753 to 780 (SISH…STSS).

This is Pumilio domain-containing protein C4G8.03c from Schizosaccharomyces pombe (strain 972 / ATCC 24843) (Fission yeast).